A 499-amino-acid polypeptide reads, in one-letter code: MVFSVSIFASLAPYLVSALLLFFLIEQLSYLVKKRNLPGPLFVPPIIGNAISLVRDPTSFWFKQSDTAGTSPGLAANYLIGKFIIYIRDTELSHQIFSNVRLEAFHPLGHPFGKQLFGDHSLIYLFGEDHKTVRRHLAPNFTPKALSTYSDLQQIVMLRHLRQWEESFSGGTKPVSMRDLVRELNLETSQTVFVGPYLDKEARNTFCTDYNLFNLGSMALPINLPGFAFNKARRAVMNLEKTLSVCAGKSKKRMATGEEPTCLIDFWMHAFVTEIESGNPPPLHSEDEAIGGLLFDFLFAAQDASTSSLLWAVTFLESHPKVLSKVREEVAKIWSPQSGHLITADQLAEMKYTRAVAREVVRYRPPATMVPHIATNDFPLTESYTIPKGTIVFPSVFDASFQGFTEPNRFDPDRFSETRQEDQVFKRNYLAFGWGAHQCVGQRYALNHLVLFIAMFSSLFDFKRLQSDGCDDIIYCPTISPKDGCTVFLSKRIVTYPNL.

A helical membrane pass occupies residues 5-25; the sequence is VSIFASLAPYLVSALLLFFLI. C439 lines the heme pocket.

Belongs to the cytochrome P450 family. Requires heme as cofactor. As to expression, expressed in the vascular tissues of roots, shoots, stems and leaves. Expressed in root tips, carpes, siliques and seeds.

It is found in the membrane. The catalysed reaction is 5-dehydroepisterol + NADPH + O2 + H(+) = ergosta-5,7,22,24(28)-tetraen-3beta-ol + NADP(+) + 2 H2O. Its pathway is steroid biosynthesis; sterol biosynthesis. Functionally, required to form the C-22 double bond in the sterol side chain. Possesses in vitro C-22 desaturase activity toward 24-epi-campesterol and beta-sitosterol and produces brassicasterol and stigmasterol, respectively. No activity with campesterol. The polypeptide is Cytochrome P450 710A2 (Arabidopsis thaliana (Mouse-ear cress)).